A 234-amino-acid polypeptide reads, in one-letter code: Probable transcriptional regulatory protein PFL_3960 (234 aa).

It belongs to the TACO1 family.

Its subcellular location is the cytoplasm. In Pseudomonas fluorescens (strain ATCC BAA-477 / NRRL B-23932 / Pf-5), this protein is Probable transcriptional regulatory protein PFL_3960.